The primary structure comprises 190 residues: Peptidyl-tRNA hydrolase (190 aa).

Position 14 (Y14) interacts with tRNA. H19 (proton acceptor) is an active-site residue. 3 residues coordinate tRNA: Y64, N66, and N112.

Belongs to the PTH family. In terms of assembly, monomer.

The protein resides in the cytoplasm. It catalyses the reaction an N-acyl-L-alpha-aminoacyl-tRNA + H2O = an N-acyl-L-amino acid + a tRNA + H(+). Functionally, hydrolyzes ribosome-free peptidyl-tRNAs (with 1 or more amino acids incorporated), which drop off the ribosome during protein synthesis, or as a result of ribosome stalling. In terms of biological role, catalyzes the release of premature peptidyl moieties from peptidyl-tRNA molecules trapped in stalled 50S ribosomal subunits, and thus maintains levels of free tRNAs and 50S ribosomes. The sequence is that of Peptidyl-tRNA hydrolase from Chlorobium phaeovibrioides (strain DSM 265 / 1930) (Prosthecochloris vibrioformis (strain DSM 265)).